A 319-amino-acid polypeptide reads, in one-letter code: MIFSTLEHILTHISFSIISIVITIFLISLSVDEIVGLYDSSEKGMTATFFCITGLLVTRWIYSGHFPLSDLYESLIFLSWSFSVIHMVPYFKKHKNYLSTITAPSTIFTQGFATSGLLTEMHQSEIVVPALQSQWLMMHVSMMILGYAALLCGSLLSVALLVITLRKAIRVFSKKNNFLNESFSFVEIQYMNERSNVLLTTSFCSSRNYYRAQLIQQLDQWSYRIISLGFLFLTIGILSGAVWANEAWGSYWNWDPKETWAFITWTLFAIYLHTRTNKNWESFNCAIVASIGFLIIWICYFGVNLLGIGLHSYGSFNLH.

A run of 8 helical transmembrane segments spans residues 9-29, 48-68, 71-91, 98-118, 143-163, 225-245, 258-275, and 286-306; these read ILTHISFSIISIVITIFLISL, TFFCITGLLVTRWIYSGHFPL, LYESLIFLSWSFSVIHMVPYF, LSTITAPSTIFTQGFATSGLL, MILGYAALLCGSLLSVALLVI, IISLGFLFLTIGILSGAVWAN, ETWAFITWTLFAIYLHTR, and AIVASIGFLIIWICYFGVNLL.

It belongs to the CcmF/CycK/Ccl1/NrfE/CcsA family. May interact with Ccs1.

It localises to the plastid. Its subcellular location is the chloroplast thylakoid membrane. In terms of biological role, required during biogenesis of c-type cytochromes (cytochrome c6 and cytochrome f) at the step of heme attachment. In Eucalyptus globulus subsp. globulus (Tasmanian blue gum), this protein is Cytochrome c biogenesis protein CcsA.